A 484-amino-acid chain; its full sequence is Toluene efflux pump outer membrane protein TtgC (484 aa).

Positions methionine 1–glycine 17 are cleaved as a signal peptide. Cysteine 18 carries N-palmitoyl cysteine lipidation. Cysteine 18 carries the S-diacylglycerol cysteine lipid modification.

The protein belongs to the outer membrane factor (OMF) (TC 1.B.17) family.

It is found in the cell outer membrane. The outer membrane component of a constitutive organic solvent efflux system. Is involved in export of toluene, styrene, m-xylene, propylbenzene and ethylbenzene. Also exports AMP and the antibiotics carbenicillin, nalidixic acid, chloramphenicol and tetracycline. In Pseudomonas putida (strain DOT-T1E), this protein is Toluene efflux pump outer membrane protein TtgC (ttgC).